We begin with the raw amino-acid sequence, 205 residues long: Thiamine-phosphate synthase (205 aa).

Residues 34-38 (QLRCK) and Asn-66 contribute to the 4-amino-2-methyl-5-(diphosphooxymethyl)pyrimidine site. 2 residues coordinate Mg(2+): Asp-67 and Asp-86. Ser-105 is a 4-amino-2-methyl-5-(diphosphooxymethyl)pyrimidine binding site. 131 to 133 (TTT) lines the 2-[(2R,5Z)-2-carboxy-4-methylthiazol-5(2H)-ylidene]ethyl phosphate pocket. 4-amino-2-methyl-5-(diphosphooxymethyl)pyrimidine is bound at residue Lys-134. Residue Gly-163 coordinates 2-[(2R,5Z)-2-carboxy-4-methylthiazol-5(2H)-ylidene]ethyl phosphate.

It belongs to the thiamine-phosphate synthase family. Mg(2+) is required as a cofactor.

The catalysed reaction is 2-[(2R,5Z)-2-carboxy-4-methylthiazol-5(2H)-ylidene]ethyl phosphate + 4-amino-2-methyl-5-(diphosphooxymethyl)pyrimidine + 2 H(+) = thiamine phosphate + CO2 + diphosphate. The enzyme catalyses 2-(2-carboxy-4-methylthiazol-5-yl)ethyl phosphate + 4-amino-2-methyl-5-(diphosphooxymethyl)pyrimidine + 2 H(+) = thiamine phosphate + CO2 + diphosphate. It catalyses the reaction 4-methyl-5-(2-phosphooxyethyl)-thiazole + 4-amino-2-methyl-5-(diphosphooxymethyl)pyrimidine + H(+) = thiamine phosphate + diphosphate. Its pathway is cofactor biosynthesis; thiamine diphosphate biosynthesis; thiamine phosphate from 4-amino-2-methyl-5-diphosphomethylpyrimidine and 4-methyl-5-(2-phosphoethyl)-thiazole: step 1/1. Condenses 4-methyl-5-(beta-hydroxyethyl)thiazole monophosphate (THZ-P) and 2-methyl-4-amino-5-hydroxymethyl pyrimidine pyrophosphate (HMP-PP) to form thiamine monophosphate (TMP). This Neisseria meningitidis serogroup A / serotype 4A (strain DSM 15465 / Z2491) protein is Thiamine-phosphate synthase.